The sequence spans 452 residues: NADH-ubiquinone oxidoreductase chain 4 (452 aa).

14 helical membrane passes run 4–24 (LVLG…SMVW), 29–49 (VGSV…MTIS), 59–79 (FVSL…LLAS), 88–110 (LIYQ…LAFM), 114–136 (LLLF…TRWG), 144–164 (AGTY…ICLI), 182–202 (VFQL…AFLV), 221–241 (PIAG…YGMM), 252–272 (MLSS…MGGI), 282–304 (LIAY…GVAW), 309–331 (AMVL…NLWY), 345–365 (LIMI…MNMA), 390–410 (IVYM…LFGM), and 432–452 (LLTT…GLMF).

This sequence belongs to the complex I subunit 4 family.

It localises to the mitochondrion membrane. It catalyses the reaction a ubiquinone + NADH + 5 H(+)(in) = a ubiquinol + NAD(+) + 4 H(+)(out). Its function is as follows. Core subunit of the mitochondrial membrane respiratory chain NADH dehydrogenase (Complex I) that is believed to belong to the minimal assembly required for catalysis. Complex I functions in the transfer of electrons from NADH to the respiratory chain. The immediate electron acceptor for the enzyme is believed to be ubiquinone. The protein is NADH-ubiquinone oxidoreductase chain 4 (ND4) of Branchiostoma lanceolatum (Common lancelet).